The primary structure comprises 223 residues: Ribosomal RNA small subunit methyltransferase G (223 aa).

S-adenosyl-L-methionine is bound by residues Gly82, Leu87, 133 to 134 (AE), and Arg151.

This sequence belongs to the methyltransferase superfamily. RNA methyltransferase RsmG family.

It is found in the cytoplasm. Functionally, specifically methylates the N7 position of guanine in position 518 of 16S rRNA. The protein is Ribosomal RNA small subunit methyltransferase G of Corynebacterium glutamicum (strain R).